A 388-amino-acid chain; its full sequence is Zinc finger C2H2 protein ECU10_0150 (388 aa).

The segment at 299-322 adopts a C2H2-type zinc-finger fold; it reads YKCGFCGKAFESEKFIFNHFNNKH.

In Encephalitozoon cuniculi (strain GB-M1) (Microsporidian parasite), this protein is Zinc finger C2H2 protein ECU10_0150.